The following is a 256-amino-acid chain: Pre-mRNA-splicing factor CWC24 (256 aa).

Residues 1–80 (MFKRKKNAGQ…SRNLSKTDEA (80 aa)) are disordered. Residues 18-34 (SDSSSEGSGDESALSSA) are compositionally biased toward low complexity. Positions 45-66 (RTTPTSVATSTKVRAPSFSSTI) are enriched in polar residues. Positions 67 to 80 (DHSHSRNLSKTDEA) are enriched in basic and acidic residues. The C3H1-type zinc-finger motif lies at 131-159 (DYQPDVCKDYKLTGFCGYGDSCKFLHMRE). Residues 173–182 (IKNREDDPPR) are compositionally biased toward basic and acidic residues. Residues 173–200 (IKNREDDPPRDAGGVSRDADTATSRADS) form a disordered region. The RING-type zinc finger occupies 206-244 (CPICQGEFKSPVVTQCCHYFCEKCFLAKHKKKQNCFVCG).

The protein belongs to the CWC24 family. As to quaternary structure, associated with the spliceosome.

The protein localises to the nucleus. Involved in pre-mRNA splicing. The sequence is that of Pre-mRNA-splicing factor CWC24 (CWC24) from Yarrowia lipolytica (strain CLIB 122 / E 150) (Yeast).